We begin with the raw amino-acid sequence, 1383 residues long: ATP-dependent RNA helicase TDRD9 (1383 aa).

Positions 35 to 82 (EAPREEVQRSEEVPNEDPTAQAQVPVKATAPARPASTSGRSLSQRSSE) are disordered. The segment covering 36-46 (APREEVQRSEE) has biased composition (basic and acidic residues). Positions 70 to 80 (STSGRSLSQRS) are enriched in low complexity. Residues 144–310 (ISLIESNSVV…FAVPVQNKMN (167 aa)) enclose the Helicase ATP-binding domain. ATP is bound at residue 157 to 164 (GATGSGKS). Positions 256–259 (DEVH) match the DEAH box motif. A Helicase C-terminal domain is found at 378 to 545 (SGAQFVSERS…ILKVKLLDMG (168 aa)). The 61-residue stretch at 945–1005 (HPHPDLVCLA…REIPCQFLEL (61 aa)) folds into the Tudor domain.

This sequence belongs to the DEAD box helicase family. DEAH subfamily. As to quaternary structure, interacts with piRNA-associated proteins PIWIL1 and PIWIL4. In terms of tissue distribution, predominantly expressed in reproductive organs. Detected in mitotic spermatogonia, meiotic spermatocytes (predominantly at the pachytene stage), haploid spermatids in the testis, and in growing oocytes in the ovary (at protein level).

It is found in the cytoplasm. The protein resides in the nucleus. The catalysed reaction is ATP + H2O = ADP + phosphate + H(+). In terms of biological role, ATP-binding RNA helicase which plays a central role during spermatogenesis by repressing transposable elements and preventing their mobilization, which is essential for the germline integrity. Acts via the piRNA metabolic process, which mediates the repression of transposable elements during meiosis by forming complexes composed of piRNAs and Piwi proteins and governs the methylation and subsequent repression of transposons. Acts downstream of piRNA biogenesis: exclusively required for transposon silencing in the nucleus, suggesting that it acts as a nuclear effector in the nucleus together with PIWIL4. This is ATP-dependent RNA helicase TDRD9 from Mus musculus (Mouse).